A 198-amino-acid polypeptide reads, in one-letter code: COMM domain-containing protein 9 (198 aa).

An N-acetylalanine modification is found at Ala2. Residues 122 to 196 (RLVDLDWRVD…RIRDQLSAVA (75 aa)) form the COMM domain.

This sequence belongs to the COMM domain-containing protein 9 family. Component of the commander complex consisting of the CCC subcomplex and the retriever subcomplex. Component of the CCC (COMMD/CCDC22/CCDC93) subcomplex consisting of COMMD1, COMMD2, COMMD3, COMMD4, COMMD5, COMMD6, COMMD7, COMMD8, COMMD9, COMMD10, CCDC22 and CCDC93; within the complex forms a heterodimer with COMMD7. Interacts with RELB and NFKB1/p105. Interacts with CCDC22, CCDC93, SCNN1B, CUL1.

It localises to the nucleus. Its subcellular location is the cytoplasmic vesicle. Functionally, scaffold protein in the commander complex that is essential for endosomal recycling of transmembrane cargos; the commander complex is composed of the CCC subcomplex and the retriever subcomplex. May modulate activity of cullin-RING E3 ubiquitin ligase (CRL) complexes. May down-regulate activation of NF-kappa-B. Modulates Na(+) transport in epithelial cells by regulation of apical cell surface expression of amiloride-sensitive sodium channel (ENaC) subunits. The polypeptide is COMM domain-containing protein 9 (Commd9) (Mus musculus (Mouse)).